A 79-amino-acid chain; its full sequence is Sec-independent protein translocase protein TatA (79 aa).

The helical transmembrane segment at Met-1–Gly-21 threads the bilayer. Positions Glu-45–Ser-79 are disordered. Over residues Asp-51–Ala-63 the composition is skewed to basic and acidic residues.

The protein belongs to the TatA/E family. In terms of assembly, the Tat system comprises two distinct complexes: a TatABC complex, containing multiple copies of TatA, TatB and TatC subunits, and a separate TatA complex, containing only TatA subunits. Substrates initially bind to the TatABC complex, which probably triggers association of the separate TatA complex to form the active translocon.

Its subcellular location is the cell inner membrane. Part of the twin-arginine translocation (Tat) system that transports large folded proteins containing a characteristic twin-arginine motif in their signal peptide across membranes. TatA could form the protein-conducting channel of the Tat system. This is Sec-independent protein translocase protein TatA from Alteromonas mediterranea (strain DSM 17117 / CIP 110805 / LMG 28347 / Deep ecotype).